A 262-amino-acid chain; its full sequence is Pyridoxine 5'-phosphate synthase (262 aa).

A 3-amino-2-oxopropyl phosphate-binding site is contributed by Asn6. Asp8–His9 lines the 1-deoxy-D-xylulose 5-phosphate pocket. Arg17 contacts 3-amino-2-oxopropyl phosphate. The Proton acceptor role is filled by His41. 1-deoxy-D-xylulose 5-phosphate contacts are provided by Arg43 and His48. Glu68 (proton acceptor) is an active-site residue. A 1-deoxy-D-xylulose 5-phosphate-binding site is contributed by Thr98. The Proton donor role is filled by His210. 3-amino-2-oxopropyl phosphate is bound by residues Gly211 and Gly232–Gln233.

Belongs to the PNP synthase family. In terms of assembly, homooctamer; tetramer of dimers.

The protein localises to the cytoplasm. It catalyses the reaction 3-amino-2-oxopropyl phosphate + 1-deoxy-D-xylulose 5-phosphate = pyridoxine 5'-phosphate + phosphate + 2 H2O + H(+). Its pathway is cofactor biosynthesis; pyridoxine 5'-phosphate biosynthesis; pyridoxine 5'-phosphate from D-erythrose 4-phosphate: step 5/5. Its function is as follows. Catalyzes the complicated ring closure reaction between the two acyclic compounds 1-deoxy-D-xylulose-5-phosphate (DXP) and 3-amino-2-oxopropyl phosphate (1-amino-acetone-3-phosphate or AAP) to form pyridoxine 5'-phosphate (PNP) and inorganic phosphate. The protein is Pyridoxine 5'-phosphate synthase of Campylobacter jejuni subsp. jejuni serotype O:23/36 (strain 81-176).